The following is a 497-amino-acid chain: MGTEKKEGLPKEETSEDSKPHGQTVEKLAQEVCHGHEFGEASEEDMSEGHLRESSKEIIEKRYPQERHFASGLLIFKKSSSGEKTSENPRGFNPNPSVLCHGGAERASACAASGHNCLGSIELTKAQGPPVGEKPHTCKECGKAFNQNSHLIQHMRVHSGEKPFECKECGKTFGTNSSLRRHQRIHAGEKPFACTECGKAFIQSSHLIHHHRIHTGERPYKCEECGKAFSQNSALILHQRIHTGEKPYECNECGKTFRVSSQLIQHQRIHTEERYHECSECGKAFKHSSGLIRHQKIHTGEKPYLCNECGKGFGQSSELIRHQRIHTGDKPYECSECGKTFGQNSEIIRHIRIHTGEKPYVCKECGKAFRGNSELLRHERIHTGEKPYECFECGKAFRRTSHLIVHQRIHTGEKPHQCNECARTFWDNSELLLHQKIHIGEKPYECSECEKTFSQHSQLTIHQRIHTGEKPYECQECQKTFSRSSHLLRHQSVHCSE.

Residues 1 to 20 (MGTEKKEGLPKEETSEDSKP) are compositionally biased toward basic and acidic residues. The disordered stretch occupies residues 1-53 (MGTEKKEGLPKEETSEDSKPHGQTVEKLAQEVCHGHEFGEASEEDMSEGHLRE). Residues K6 and K11 each participate in a glycyl lysine isopeptide (Lys-Gly) (interchain with G-Cter in SUMO2) cross-link. C2H2-type zinc fingers lie at residues 136-158 (HTCKECGKAFNQNSHLIQHMRVH), 164-186 (FECKECGKTFGTNSSLRRHQRIH), 192-214 (FACTECGKAFIQSSHLIHHHRIH), 220-242 (YKCEECGKAFSQNSALILHQRIH), 248-270 (YECNECGKTFRVSSQLIQHQRIH), 276-298 (HECSECGKAFKHSSGLIRHQKIH), 304-326 (YLCNECGKGFGQSSELIRHQRIH), 332-354 (YECSECGKTFGQNSEIIRHIRIH), 360-382 (YVCKECGKAFRGNSELLRHERIH), 388-410 (YECFECGKAFRRTSHLIVHQRIH), 416-438 (HQCNECARTFWDNSELLLHQKIH), 444-466 (YECSECEKTFSQHSQLTIHQRIH), and 472-494 (YECQECQKTFSRSSHLLRHQSVH).

Belongs to the krueppel C2H2-type zinc-finger protein family.

The protein localises to the nucleus. In terms of biological role, may be involved in transcriptional regulation. The chain is Zinc finger protein 3 (Zfp3) from Mus musculus (Mouse).